The chain runs to 849 residues: MCNIIYNNVYQYNILKNIMSFVKEKNTPVMEQYLNLKAQYKDHLLFYRLGDFYELFFDDAIKAAKLLNIVLTKRGNSCGQEIPMCGVPAHSSESYLHKLIDLGFKVAICDQLETADEAKKRGYKSIVKRDVVRVVTPGTIIEDSLLEDKSNNYLASIVEQNDEYAISWLELSTGKFFHTLTSLKALDSDLLRISPRELLISEKFTEDEKIRSILKNYKISITQHAQSFFEYSKSHRTLCEFYKIRELGSIGNFSKVEIMACGALLEYVRVTQRGSIPRLEFPKTYKQQNFMLIDTSARRNLELFSTQFGEKKGSLISVIDHTVTASGGRLLKQMLASPLACSKAINLRLSTAQFFVNNHDSRRKIREILSNIPDIERSLSRLILGRGSPKDMNLLKIGLGKTLELSEFLCKIESGENGSLPQQYVIQTEIQPASRAGITVKSDESELSTIHKSLGNHKDLFELLNSAILDNNLSSVKEGGFIHSKYNSELSELSYILNNSNKLVTKLRESYRDLTGIAALKILHNNILGYYVEVSANHKITSDIFIHRQSLANSMRYTTNELKELENKILTARDAAIGLEMKIFSELCSEVAKESEKIALAANALAKLDIRTAFAELAVQNNYVKPIIDDSKEFNICSGRHPVVEVNDKFIANSINLAGIHLITGPNMAGKSTFLRQNALIAILAHMGSFVPAESAHIGVIDKIFSRVGATDNITAGYSTFMVEMIETATIVNQATDRSLVILDEIGRGTGVYDGLSIAQAVIEHIHNVNKCRAIFATHYHELTKVSKYLKNVKCFCVKIREWNGEVIFLHEVIEGIADESYGIHVAKLAGFPDSVLNRASEVFEELKA.

Residue 665–672 coordinates ATP; it reads GPNMAGKS.

Belongs to the DNA mismatch repair MutS family.

This protein is involved in the repair of mismatches in DNA. It is possible that it carries out the mismatch recognition step. This protein has a weak ATPase activity. The sequence is that of DNA mismatch repair protein MutS from Wolbachia pipientis wMel.